We begin with the raw amino-acid sequence, 268 residues long: MNGLMNGKRGLIMGVANSHSIAWGIAKSLAAQGAELAFTYQGEALGKRVKPLAAEVNSDFLLPCDVEDIGSVDAVVDAIKERWGKLDFVVHAIGFSDKNELKGLYADTTRDNFSRTMVISCFSFTEIAKRAAELMSEGGTMLTLTYGGSMRVMPNYNVMGVAKAALEASVRYLAADYGSRGIRVNAISAGPIRTLAGAGISDARAMLSWQQKNSPLRRTVTIEDVGSSALYLLSDLSRGVTGEIHYVDSGYNITSMPTLEALRVADAD.

NAD(+) is bound by residues Gly-14, 20 to 21, Gln-41, 65 to 66, and Ile-93; these read SI and DV. Active-site proton acceptor residues include Tyr-146 and Tyr-156. NAD(+) is bound by residues Lys-163 and 192–196; that span reads IRTLA.

It belongs to the short-chain dehydrogenases/reductases (SDR) family. FabI subfamily.

The protein resides in the cell inner membrane. It catalyses the reaction a 2,3-saturated acyl-[ACP] + NAD(+) = a (2E)-enoyl-[ACP] + NADH + H(+). It participates in lipid metabolism; fatty acid biosynthesis. This is Enoyl-[acyl-carrier-protein] reductase [NADH] 2 (fabI2) from Rhizobium meliloti (strain 1021) (Ensifer meliloti).